A 480-amino-acid chain; its full sequence is MKVPAEIFVNNDLQTLLVQELHDTCCGSREEADSAFIPALRQAANVAALPGIVKASLAMPDVHSGYGFCIGNVAAFDMDDPQAVISPGGVGFDINCGVRLIRTNLTEKDVEGSVREELAEALFRNIPVGVGVSGGIPCSIDDLDQLLRNGVDWAIEKGYAWEEDKDHCEENGCMETADPNCVSKRAKKRGLKQLGTLGAGNHYTEIQVVDEVYNTEAAKIMGIGTVGQVCIMIHTGSRGLGHQVATDALQVMEEAMCRDAIDLNDRQLSCARISSKEGREYLAAMSAAANFAWVNRSCITYLARKAFSEVFQRESDDMDMHLVYDVCHNIAKVEQHIVDGEQKTLLVHRKGSTRAYPPCHPDIPKDYQTIGQPVLIGGTMGTCSYVLVGTDKGMAETFGSTCHGAGRALSRNQSRIKLDHNQVLNKLKEDGIAIRVASPKLVTEEAPESYKNVCDVIETCQVAGISEKVVKLRPIAVIKG.

Residues aspartate 93, cysteine 96, histidine 202, histidine 234, and histidine 328 each coordinate Mn(2+). A GMP-binding site is contributed by asparagine 201–glutamate 205. GMP-binding positions include histidine 328–asparagine 329, glycine 377–methionine 380, serine 384, histidine 403–glycine 406, and lysine 479. Histidine 403 (GMP-histidine intermediate) is an active-site residue.

This sequence belongs to the RtcB family. In terms of assembly, catalytic component of the tRNA-splicing ligase complex. Mn(2+) is required as a cofactor.

The enzyme catalyses a 3'-end 3'-phospho-ribonucleotide-RNA + a 5'-end dephospho-ribonucleoside-RNA + GTP = a ribonucleotidyl-ribonucleotide-RNA + GMP + diphosphate. It carries out the reaction a 3'-end 2',3'-cyclophospho-ribonucleotide-RNA + a 5'-end dephospho-ribonucleoside-RNA + GTP + H2O = a ribonucleotidyl-ribonucleotide-RNA + GMP + diphosphate + H(+). In terms of biological role, catalytic subunit of the tRNA-splicing ligase complex that acts by directly joining spliced tRNA halves to mature-sized tRNAs by incorporating the precursor-derived splice junction phosphate into the mature tRNA as a canonical 3',5'-phosphodiester. May act as an RNA ligase with broad substrate specificity, and may function toward other RNAs. The polypeptide is RNA-splicing ligase RtcB homolog (Thalassiosira pseudonana (Marine diatom)).